The following is a 156-amino-acid chain: Small ribosomal subunit protein uS7 (156 aa).

It belongs to the universal ribosomal protein uS7 family. As to quaternary structure, part of the 30S ribosomal subunit. Contacts proteins S9 and S11.

One of the primary rRNA binding proteins, it binds directly to 16S rRNA where it nucleates assembly of the head domain of the 30S subunit. Is located at the subunit interface close to the decoding center, probably blocks exit of the E-site tRNA. The sequence is that of Small ribosomal subunit protein uS7 from Chlorobaculum parvum (strain DSM 263 / NCIMB 8327) (Chlorobium vibrioforme subsp. thiosulfatophilum).